Reading from the N-terminus, the 621-residue chain is tRNA uridine 5-carboxymethylaminomethyl modification enzyme MnmG (621 aa).

Gly9 to Gly14 provides a ligand contact to FAD. Residue Gly268–Phe282 coordinates NAD(+).

This sequence belongs to the MnmG family. As to quaternary structure, homodimer. Heterotetramer of two MnmE and two MnmG subunits. FAD is required as a cofactor.

The protein resides in the cytoplasm. In terms of biological role, NAD-binding protein involved in the addition of a carboxymethylaminomethyl (cmnm) group at the wobble position (U34) of certain tRNAs, forming tRNA-cmnm(5)s(2)U34. This is tRNA uridine 5-carboxymethylaminomethyl modification enzyme MnmG from Campylobacter fetus subsp. fetus (strain 82-40).